Reading from the N-terminus, the 485-residue chain is Argininosuccinate lyase (485 aa).

Belongs to the lyase 1 family. Argininosuccinate lyase subfamily.

The protein resides in the cytoplasm. It carries out the reaction 2-(N(omega)-L-arginino)succinate = fumarate + L-arginine. It functions in the pathway amino-acid biosynthesis; L-arginine biosynthesis; L-arginine from L-ornithine and carbamoyl phosphate: step 3/3. This is Argininosuccinate lyase from Halobacterium salinarum (strain ATCC 29341 / DSM 671 / R1).